A 311-amino-acid chain; its full sequence is Cytosolic Fe-S cluster assembly factor Nubp1 homolog (311 aa).

Residues 1–20 (MQAPPPEHCPGVESENAGKG) form a disordered region. Positions 9, 23, 26, and 32 each coordinate [4Fe-4S] cluster. 63-70 (GKGGVGKS) lines the ATP pocket. [4Fe-4S] cluster-binding residues include C240 and C243.

This sequence belongs to the Mrp/NBP35 ATP-binding proteins family. NUBP1/NBP35 subfamily. As to quaternary structure, heterotetramer of 2 Nubp1 and 2 Nubp2 chains. [4Fe-4S] cluster is required as a cofactor.

The protein resides in the cytoplasm. Its function is as follows. Component of the cytosolic iron-sulfur (Fe/S) protein assembly (CIA) machinery. Required for maturation of extramitochondrial Fe-S proteins. The Nubp1-Nubp2 heterotetramer forms a Fe-S scaffold complex, mediating the de novo assembly of an Fe-S cluster and its transfer to target apoproteins. In Drosophila simulans (Fruit fly), this protein is Cytosolic Fe-S cluster assembly factor Nubp1 homolog.